We begin with the raw amino-acid sequence, 377 residues long: Succinyl-diaminopimelate desuccinylase (377 aa).

Residue H66 coordinates Zn(2+). D68 is a catalytic residue. D99 lines the Zn(2+) pocket. Catalysis depends on E133, which acts as the Proton acceptor. The Zn(2+) site is built by E134, E163, and H349.

It belongs to the peptidase M20A family. DapE subfamily. As to quaternary structure, homodimer. Zn(2+) serves as cofactor. Requires Co(2+) as cofactor.

It catalyses the reaction N-succinyl-(2S,6S)-2,6-diaminopimelate + H2O = (2S,6S)-2,6-diaminopimelate + succinate. It participates in amino-acid biosynthesis; L-lysine biosynthesis via DAP pathway; LL-2,6-diaminopimelate from (S)-tetrahydrodipicolinate (succinylase route): step 3/3. Its function is as follows. Catalyzes the hydrolysis of N-succinyl-L,L-diaminopimelic acid (SDAP), forming succinate and LL-2,6-diaminopimelate (DAP), an intermediate involved in the bacterial biosynthesis of lysine and meso-diaminopimelic acid, an essential component of bacterial cell walls. This is Succinyl-diaminopimelate desuccinylase from Legionella pneumophila (strain Corby).